Consider the following 586-residue polypeptide: Aspartate--tRNA ligase (586 aa).

Glutamate 171 is a binding site for L-aspartate. The tract at residues glutamine 195–lysine 198 is aspartate. Arginine 217 provides a ligand contact to L-aspartate. ATP is bound by residues arginine 217–glutamate 219 and glutamine 226. Histidine 448 contributes to the L-aspartate binding site. Glutamate 482 lines the ATP pocket. Arginine 489 lines the L-aspartate pocket. Glycine 534 to arginine 537 is a binding site for ATP.

Belongs to the class-II aminoacyl-tRNA synthetase family. Type 1 subfamily. In terms of assembly, homodimer.

It is found in the cytoplasm. It carries out the reaction tRNA(Asp) + L-aspartate + ATP = L-aspartyl-tRNA(Asp) + AMP + diphosphate. Catalyzes the attachment of L-aspartate to tRNA(Asp) in a two-step reaction: L-aspartate is first activated by ATP to form Asp-AMP and then transferred to the acceptor end of tRNA(Asp). The chain is Aspartate--tRNA ligase from Buchnera aphidicola subsp. Acyrthosiphon pisum (strain 5A).